The following is a 491-amino-acid chain: Ran-binding protein 3 (491 aa).

Positions 1-10 (MADLANEEKP) are enriched in basic and acidic residues. Disordered stretches follow at residues 1-177 (MADL…HCEE) and 255-292 (VLSP…KKES). Position 2 is an N-acetylalanine (alanine 2). An N6-acetyllysine mark is found at lysine 9 and lysine 21. Residues serine 32, serine 33, and serine 40 each carry the phosphoserine modification. The short motif at 49–57 (PPVKRERTS) is the Nuclear localization signal element. Over residues 51–67 (VKRERTSSLTHSEEKSS) the composition is skewed to basic and acidic residues. Phosphothreonine is present on threonine 56. Serine 58 is modified (phosphoserine). Polar residues-rich tracts occupy residues 111–124 (VLSQ…TNGV) and 133–149 (PATS…SPSE). Serine 146 carries the phosphoserine modification. Basic and acidic residues predominate over residues 152-162 (EETHTLEEKVP). Residues serine 257, serine 277, serine 279, and serine 296 each carry the phosphoserine modification. The segment covering 275-286 (AQSGSESSSQEA) has biased composition (low complexity). The 141-residue stretch at 302 to 442 (KATAWTCLLE…LALRSRAEQE (141 aa)) folds into the RanBD1 domain. A disordered region spans residues 438-491 (RAEQEQEAKAPPPEPGATRATEEEDSDEDAVLAPSGVTGAGTGDEGDGQAPGST). Serine 463 carries the post-translational modification Phosphoserine.

As to quaternary structure, interacts with CHC1 in a Ran-stimulated manner. Interacts with XPO1. Interacts (via its C-terminal R domain) with SMAD2 (dephosphorylated form via its MH1 and MH2 domains); the interaction results in the nuclear export of SMAD2 and termination of the TGF-beta signaling. Interacts (via its C-terminal R domain) with SMAD3 (dephosphorylated form via its MH1 domain); the interaction results in the nuclear export of SMAD3 and termination of the TGF-beta signaling. Phosphorylation at Ser-58 promotes its import into the nucleus.

The protein localises to the cytoplasm. Its subcellular location is the nucleus. In terms of biological role, acts as a cofactor for XPO1/CRM1-mediated nuclear export, perhaps as export complex scaffolding protein. Bound to XPO1/CRM1, stabilizes the XPO1/CRM1-cargo interaction. In the absence of Ran-bound GTP prevents binding of XPO1/CRM1 to the nuclear pore complex. Binds to CHC1/RCC1 and increases the guanine nucleotide exchange activity of CHC1/RCC1. Recruits XPO1/CRM1 to CHC1/RCC1 in a Ran-dependent manner. Negative regulator of TGF-beta signaling through interaction with the R-SMAD proteins, SMAD2 and SMAD3, and mediating their nuclear export. This Mus musculus (Mouse) protein is Ran-binding protein 3 (Ranbp3).